We begin with the raw amino-acid sequence, 235 residues long: Ubiquinone biosynthesis O-methyltransferase (235 aa).

S-adenosyl-L-methionine contacts are provided by R39, G59, D80, and M124.

The protein belongs to the methyltransferase superfamily. UbiG/COQ3 family.

It carries out the reaction a 3-demethylubiquinol + S-adenosyl-L-methionine = a ubiquinol + S-adenosyl-L-homocysteine + H(+). The catalysed reaction is a 3-(all-trans-polyprenyl)benzene-1,2-diol + S-adenosyl-L-methionine = a 2-methoxy-6-(all-trans-polyprenyl)phenol + S-adenosyl-L-homocysteine + H(+). It functions in the pathway cofactor biosynthesis; ubiquinone biosynthesis. Its function is as follows. O-methyltransferase that catalyzes the 2 O-methylation steps in the ubiquinone biosynthetic pathway. The protein is Ubiquinone biosynthesis O-methyltransferase of Vibrio parahaemolyticus serotype O3:K6 (strain RIMD 2210633).